A 266-amino-acid chain; its full sequence is Decarboxylase tropJ (266 aa).

The Proton acceptor role is filled by Glu-80. Zn(2+) contacts are provided by Glu-80, His-99, His-101, and His-180.

Belongs to the aldolase class II family. The cofactor is Zn(2+).

Its pathway is secondary metabolite biosynthesis. Functionally, decarboxylase; part of the gene cluster that mediates the biosynthesis of the tropolone class of fungal maleic anhydrides. The pathway begins with the synthesis of 3-methylorcinaldehyde by the non-reducing polyketide synthase (PKS) tropA. 3-methylorcinaldehyde is the substrate for the FAD-dependent monooxygenase tropB to yield a dearomatized hydroxycyclohexadione. The 2-oxoglutarate-dependent dioxygenase tropC then performs the oxidative ring expansion to provide the first tropolone metabolite stipitaldehyde. Trop D converts stipitaldehyde into stipitacetal which is in turn converted to stipitalide by the short-chain dehydrogenase/reductase tropE. The next steps involve tropF, tropG, tropH, tropI and tropJ to form successive tropolone maleic anhydrides including stipitaldehydic, stipitatonic and stipitatic acids. The protein is Decarboxylase tropJ of Talaromyces stipitatus (strain ATCC 10500 / CBS 375.48 / QM 6759 / NRRL 1006) (Penicillium stipitatum).